A 637-amino-acid chain; its full sequence is Early transcription factor 70 kDa subunit (637 aa).

A Helicase ATP-binding domain is found at 32 to 185 (RTIIDENRSV…GHIIDLMSEE (154 aa)). ATP is bound at residue 45–52 (HIMGSGKT). The short motif at 135–138 (DKAH) is the DEXH box element. A Helicase C-terminal domain is found at 327 to 507 (KFKYFINRIQ…VLPFDIKKLL (181 aa)).

It belongs to the helicase family. VETF subfamily. In terms of assembly, heterodimer of a 70 kDa and a 82 kDa subunit. Part of the early transcription complex composed of ETF, RAP94/OPG109, and the DNA-directed RNA polymerase.

The protein localises to the virion. Functionally, acts with RNA polymerase to initiate transcription from early gene promoters. Is recruited by the RPO-associated protein of 94 kDa RAP94/OPG109 to form the early transcription complex, which also contains the core RNA polymerase. ETF heterodimer binds to early gene promoters. This Homo sapiens (Human) protein is Early transcription factor 70 kDa subunit (OPG118).